Reading from the N-terminus, the 336-residue chain is UPF0104 membrane protein MJ1595 (336 aa).

9 helical membrane-spanning segments follow: residues 9 to 29, 40 to 60, 68 to 88, 127 to 147, 154 to 174, 223 to 243, 245 to 265, 285 to 305, and 306 to 326; these read STIL…YIGL, NPEY…ILSA, ILGY…GLFI, VLDT…FVVT, YLIL…YLIA, WEVV…ILKL, LLFL…VYLI, VMIL…AVTL, and LDRL…MLII.

This sequence belongs to the UPF0104 family.

The protein resides in the cell membrane. The polypeptide is UPF0104 membrane protein MJ1595 (Methanocaldococcus jannaschii (strain ATCC 43067 / DSM 2661 / JAL-1 / JCM 10045 / NBRC 100440) (Methanococcus jannaschii)).